The following is a 200-amino-acid chain: Holliday junction branch migration complex subunit RuvA (200 aa).

The domain I stretch occupies residues Met1–Ser64. The tract at residues Ser65–Thr143 is domain II. Positions Pro144–Glu154 are flexible linker. The interval Glu154–Arg200 is domain III.

Belongs to the RuvA family. Homotetramer. Forms an RuvA(8)-RuvB(12)-Holliday junction (HJ) complex. HJ DNA is sandwiched between 2 RuvA tetramers; dsDNA enters through RuvA and exits via RuvB. An RuvB hexamer assembles on each DNA strand where it exits the tetramer. Each RuvB hexamer is contacted by two RuvA subunits (via domain III) on 2 adjacent RuvB subunits; this complex drives branch migration. In the full resolvosome a probable DNA-RuvA(4)-RuvB(12)-RuvC(2) complex forms which resolves the HJ.

The protein localises to the cytoplasm. Functionally, the RuvA-RuvB-RuvC complex processes Holliday junction (HJ) DNA during genetic recombination and DNA repair, while the RuvA-RuvB complex plays an important role in the rescue of blocked DNA replication forks via replication fork reversal (RFR). RuvA specifically binds to HJ cruciform DNA, conferring on it an open structure. The RuvB hexamer acts as an ATP-dependent pump, pulling dsDNA into and through the RuvAB complex. HJ branch migration allows RuvC to scan DNA until it finds its consensus sequence, where it cleaves and resolves the cruciform DNA. The sequence is that of Holliday junction branch migration complex subunit RuvA from Chlorobium luteolum (strain DSM 273 / BCRC 81028 / 2530) (Pelodictyon luteolum).